The sequence spans 296 residues: Probable AP endonuclease (296 aa).

A disulfide bond links C16 and C20. The Zn(2+) site is built by H78, H115, E142, H182, H218, D231, H233, and E271.

It belongs to the AP endonuclease 2 family. Requires Zn(2+) as cofactor.

It localises to the host nucleus. Its subcellular location is the host cytoplasm. The protein resides in the virion. In terms of biological role, endonuclease that plays a role in DNA repair. Cleaves phosphodiester bonds on the 5' side of apurinic or apyrimidinic sites (AP sites). In addition to endonuclease activity, the ASFV enzyme has a proofreading 3'-5' exonuclease activity that is considerably more efficient in the elimination of a mismatch than in that of a correctly paired base. Displays 3'-phosphatase and 3'-repair diesterase activities. The single nucleotide gaps generated by the AP endonuclease are filled by the viral AP endonuclease and DNA ligase. The chain is Probable AP endonuclease from Ornithodoros (relapsing fever ticks).